The primary structure comprises 176 residues: Jacalin-related lectin 19 (176 aa).

A Jacalin-type lectin domain is found at 12 to 154; the sequence is TVFVGPWGGN…LDSIGFHLSR (143 aa).

Belongs to the jacalin lectin family.

The chain is Jacalin-related lectin 19 (JAL19) from Arabidopsis thaliana (Mouse-ear cress).